A 247-amino-acid chain; its full sequence is MNVLSCSINTLKGLYDISGVEVGQHFYWQIGGFQVHGQVLITSWVVIAILLGSATIAVRNPQTIPTGGQNFFEYVLEFIRDVSKTQIGEEYGPWVPFIGTMFLFIFVSNWSGALLPWKIIQLPHGELAAPTNDINTTVALALLTSVAYFYAGLTKRGLGYFGKYIQPTPILLPINILEDFTKPLSLSFRLFGNILADELVVVVLVSLVPLVVPIPVMLLGLFTSGIQALIFATLAAAYIGESMEGHH.

5 helical membrane-spanning segments follow: residues 38–58 (QVLI…TIAV), 95–115 (VPFI…GALL), 134–154 (INTT…AGLT), 199–219 (LVVV…VMLL), and 220–240 (GLFT…AYIG).

It belongs to the ATPase A chain family. In terms of assembly, F-type ATPases have 2 components, CF(1) - the catalytic core - and CF(0) - the membrane proton channel. CF(1) has five subunits: alpha(3), beta(3), gamma(1), delta(1), epsilon(1). CF(0) has four main subunits: a, b, b' and c.

It is found in the plastid. The protein localises to the chloroplast thylakoid membrane. Key component of the proton channel; it plays a direct role in the translocation of protons across the membrane. The sequence is that of ATP synthase subunit a, chloroplastic from Solanum lycopersicum (Tomato).